The chain runs to 78 residues: Beta-defensin 135 (78 aa).

An N-terminal signal peptide occupies residues 1–24 (MATRSVLLALVVLNLLFYVPPGRS). Intrachain disulfides connect cysteine 37–cysteine 64 and cysteine 48–cysteine 66.

It belongs to the beta-defensin family.

It localises to the secreted. Has antibacterial activity. This is Beta-defensin 135 (DEFB135) from Pan troglodytes (Chimpanzee).